The primary structure comprises 82 residues: uncharacterized protein (82 aa).

Residues 1 to 19 (MKNLLKILLIIAFANPVFA) form the signal peptide.

This is an uncharacterized protein from Rickettsia prowazekii (strain Madrid E).